Reading from the N-terminus, the 256-residue chain is Thiazole synthase (256 aa).

The active-site Schiff-base intermediate with DXP is the Lys96. 1-deoxy-D-xylulose 5-phosphate-binding positions include Gly157, 184-185 (AG), and 206-207 (NT).

It belongs to the ThiG family. As to quaternary structure, homotetramer. Forms heterodimers with either ThiH or ThiS.

It is found in the cytoplasm. The enzyme catalyses [ThiS sulfur-carrier protein]-C-terminal-Gly-aminoethanethioate + 2-iminoacetate + 1-deoxy-D-xylulose 5-phosphate = [ThiS sulfur-carrier protein]-C-terminal Gly-Gly + 2-[(2R,5Z)-2-carboxy-4-methylthiazol-5(2H)-ylidene]ethyl phosphate + 2 H2O + H(+). It participates in cofactor biosynthesis; thiamine diphosphate biosynthesis. Catalyzes the rearrangement of 1-deoxy-D-xylulose 5-phosphate (DXP) to produce the thiazole phosphate moiety of thiamine. Sulfur is provided by the thiocarboxylate moiety of the carrier protein ThiS. In vitro, sulfur can be provided by H(2)S. The sequence is that of Thiazole synthase from Brucella abortus (strain S19).